The following is a 350-amino-acid chain: Dihydroorotase (350 aa).

Residues histidine 17 and histidine 19 each coordinate Zn(2+). Substrate is bound by residues 19–21 and asparagine 45; that span reads HLR. Zn(2+) contacts are provided by lysine 103, histidine 140, and histidine 178. Lysine 103 carries the N6-carboxylysine modification. Residue histidine 140 participates in substrate binding. Leucine 224 serves as a coordination point for substrate. Aspartate 252 lines the Zn(2+) pocket. Residue aspartate 252 is part of the active site. Substrate-binding residues include histidine 256 and alanine 268.

This sequence belongs to the metallo-dependent hydrolases superfamily. DHOase family. Class II DHOase subfamily. As to quaternary structure, homodimer. The cofactor is Zn(2+).

It catalyses the reaction (S)-dihydroorotate + H2O = N-carbamoyl-L-aspartate + H(+). It functions in the pathway pyrimidine metabolism; UMP biosynthesis via de novo pathway; (S)-dihydroorotate from bicarbonate: step 3/3. Catalyzes the reversible cyclization of carbamoyl aspartate to dihydroorotate. This chain is Dihydroorotase, found in Buchnera aphidicola subsp. Acyrthosiphon pisum (strain 5A).